The following is a 713-amino-acid chain: F-box/WD repeat-containing protein 7 (713 aa).

The segment at Met1–Thr150 is disordered. Position 26 is a phosphoserine (Ser26). The segment covering Arg46–Arg55 has biased composition (basic and acidic residues). Residues Gln69–Phe84 show a composition bias toward polar residues. Positions Val87–Asp135 are enriched in acidic residues. A coiled-coil region spans residues Asn94 to Asp136. Positions Asp136–His145 are enriched in basic and acidic residues. The residue at position 211 (Thr211) is a Phosphothreonine. At Ser233 the chain carries Phosphoserine. Residues Arg284–Lys330 enclose the F-box domain. WD repeat units lie at residues Gly384–Val424, His426–Thr462, Gly465–Met504, His506–Thr542, Gly545–Thr584, His586–Gln624, and Lys628–Asn665.

As to quaternary structure, homodimer; homodimerization plays a role in substrate binding and/or ubiquitination and degradation. Component of the SCF(FBXW7) complex consisting of CUL1, RBX1, SKP1 and FBXW7. Interacts (via F-box domain) with SKP1. Interacts (via F-box domain) with pseudophosphatase STYX; the interaction is direct and prevents FBXW7 interaction with SKP1. Interacts with cyclin-E (CCNE1 or CCNE2). Interacts with PSEN1. Forms a trimeric complex with NOTCH1 and SGK1. Interacts with NOTCH1 intracellular domain/NICD and NOTCH4 intracellular domain/NICD. Interacts with NOTCH2 intracellular domain (N2ICD). Interacts with MYC (when phosphorylated). Interacts with USP28, counteracting ubiquitination of MYC. Interacts (when phosphorylated at Thr-211) with PIN1, disrupting FBXW7 dimerization and promoting FBXW7 autoubiquitination and degradation. Interacts with UBE2QL1. Interacts with FAM83D; promotes FBXW7 degradation. Interacts with MYCN; FBXW7 competes with AURKA for binding to unphosphorylated MYCN but not for binding to phosphorylated MYCN. Interacts with JUN. Found in a complex with JUN and PRR7. Interacts with JUN and PRR7; the interaction inhibits ubiquitination-mediated JUN degradation, promoting its phosphorylation and transcriptional activity. Interacts with NFE2L1. Interacts with NR1D1. Interacts with RICTOR; mediates RICTOR ubiquitination and degradation. In terms of processing, phosphorylation at Thr-211 promotes interaction with PIN1, leading to disrupt FBXW7 dimerization and promoting FBXW7 autoubiquitination and degradation. Phosphorylated by ATM at Ser-26 in response to DNA damage, promoting recruitment to DNA damage sites and 'Lys-63'-linked ubiquitination of phosphorylated XRCC4. Post-translationally, ubiquitinated: autoubiquitinates following phosphorylation at Thr-211 and subsequent interaction with PIN1. Ubiquitination leads to its degradation.

The protein resides in the nucleus. Its subcellular location is the nucleoplasm. The protein localises to the chromosome. It functions in the pathway protein modification; protein ubiquitination. Functionally, substrate recognition component of a SCF (SKP1-CUL1-F-box protein) E3 ubiquitin-protein ligase complex which mediates the ubiquitination and subsequent proteasomal degradation of target proteins. Recognizes and binds phosphorylated sites/phosphodegrons within target proteins and thereafter brings them to the SCF complex for ubiquitination. Identified substrates include cyclin-E (CCNE1 or CCNE2), JUN, MYC, NOTCH1 released notch intracellular domain (NICD), NOTCH2, MCL1, MLST8, RICTOR and probably PSEN1. Acts as a negative regulator of JNK signaling by binding to phosphorylated JUN and promoting its ubiquitination and subsequent degradation. SCF(FBXW7) complex mediates the ubiquitination and subsequent degradation of NFE2L1. Involved in bone homeostasis and negative regulation of osteoclast differentiation. Regulates the amplitude of the cyclic expression of hepatic core clock genes and genes involved in lipid and glucose metabolism via ubiquitination and proteasomal degradation of their transcriptional repressor NR1D1; CDK1-dependent phosphorylation of NR1D1 is necessary for SCF(FBXW7)-mediated ubiquitination. Also able to promote 'Lys-63'-linked ubiquitination in response to DNA damage. The SCF(FBXW7) complex facilitates double-strand break repair following phosphorylation by ATM: phosphorylation promotes localization to sites of double-strand breaks and 'Lys-63'-linked ubiquitination of phosphorylated XRCC4, enhancing DNA non-homologous end joining. The polypeptide is F-box/WD repeat-containing protein 7 (Rattus norvegicus (Rat)).